Consider the following 828-residue polypeptide: Outer membrane usher protein MrkC (828 aa).

The N-terminal stretch at 1-18 is a signal peptide; it reads MKQRSICPGRLSTAIAVA. A disulfide bridge links Cys-813 with Cys-827.

This sequence belongs to the fimbrial export usher family.

It localises to the cell outer membrane. Functionally, involved in the export and assembly of the type 3 fimbrial subunit (MrkA). This chain is Outer membrane usher protein MrkC (mrkC), found in Klebsiella pneumoniae.